Consider the following 163-residue polypeptide: Ribosome maturation factor RimM (163 aa).

The PRC barrel domain occupies 90–161 (EGRHYWGDLE…VVVDPPEGLL (72 aa)).

The protein belongs to the RimM family. As to quaternary structure, binds ribosomal protein uS19.

The protein localises to the cytoplasm. Its function is as follows. An accessory protein needed during the final step in the assembly of 30S ribosomal subunit, possibly for assembly of the head region. Essential for efficient processing of 16S rRNA. May be needed both before and after RbfA during the maturation of 16S rRNA. It has affinity for free ribosomal 30S subunits but not for 70S ribosomes. The polypeptide is Ribosome maturation factor RimM (Anaeromyxobacter dehalogenans (strain 2CP-C)).